Here is a 68-residue protein sequence, read N- to C-terminus: Large ribosomal subunit protein bL35 (68 aa).

The disordered stretch occupies residues 29–68; that stretch reads GGVSHYNTKKSSKRKRQGRKPQYVPKNLEHKVKALLPNDV. The span at 35–47 shows a compositional bias: basic residues; sequence NTKKSSKRKRQGR.

It belongs to the bacterial ribosomal protein bL35 family.

The chain is Large ribosomal subunit protein bL35 from Sulfurihydrogenibium sp. (strain YO3AOP1).